The following is a 486-amino-acid chain: Protein nucleotidyltransferase YdiU (486 aa).

Residues Gly90, Gly92, Arg93, Lys113, Asp125, Gly126, Arg176, and Arg183 each contribute to the ATP site. Asp252 functions as the Proton acceptor in the catalytic mechanism. Asn253 and Asp262 together coordinate Mg(2+). Asp262 serves as a coordination point for ATP.

The protein belongs to the SELO family. Mg(2+) serves as cofactor. It depends on Mn(2+) as a cofactor.

The catalysed reaction is L-seryl-[protein] + ATP = 3-O-(5'-adenylyl)-L-seryl-[protein] + diphosphate. The enzyme catalyses L-threonyl-[protein] + ATP = 3-O-(5'-adenylyl)-L-threonyl-[protein] + diphosphate. It catalyses the reaction L-tyrosyl-[protein] + ATP = O-(5'-adenylyl)-L-tyrosyl-[protein] + diphosphate. It carries out the reaction L-histidyl-[protein] + UTP = N(tele)-(5'-uridylyl)-L-histidyl-[protein] + diphosphate. The catalysed reaction is L-seryl-[protein] + UTP = O-(5'-uridylyl)-L-seryl-[protein] + diphosphate. The enzyme catalyses L-tyrosyl-[protein] + UTP = O-(5'-uridylyl)-L-tyrosyl-[protein] + diphosphate. In terms of biological role, nucleotidyltransferase involved in the post-translational modification of proteins. It can catalyze the addition of adenosine monophosphate (AMP) or uridine monophosphate (UMP) to a protein, resulting in modifications known as AMPylation and UMPylation. This is Protein nucleotidyltransferase YdiU from Pseudomonas paraeruginosa (strain DSM 24068 / PA7) (Pseudomonas aeruginosa (strain PA7)).